Consider the following 357-residue polypeptide: Cobalt-precorrin-5B C(1)-methyltransferase (357 aa).

It belongs to the CbiD family.

It catalyses the reaction Co-precorrin-5B + S-adenosyl-L-methionine = Co-precorrin-6A + S-adenosyl-L-homocysteine. It participates in cofactor biosynthesis; adenosylcobalamin biosynthesis; cob(II)yrinate a,c-diamide from sirohydrochlorin (anaerobic route): step 6/10. Functionally, catalyzes the methylation of C-1 in cobalt-precorrin-5B to form cobalt-precorrin-6A. The protein is Cobalt-precorrin-5B C(1)-methyltransferase of Alkaliphilus oremlandii (strain OhILAs) (Clostridium oremlandii (strain OhILAs)).